The following is a 141-amino-acid chain: Hemoglobin subunit alpha-1/2 (141 aa).

The Globin domain maps to 1 to 141 (VLSPADKTNV…VSTVLTSKYR (141 aa)). Serine 3 carries the post-translational modification Phosphoserine. Lysine 7 is modified (N6-succinyllysine). Threonine 8 bears the Phosphothreonine mark. At lysine 11 the chain carries N6-succinyllysine. Lysine 16 carries the N6-acetyllysine; alternate modification. At lysine 16 the chain carries N6-succinyllysine; alternate. A Phosphotyrosine modification is found at tyrosine 24. A Phosphoserine modification is found at serine 35. Lysine 40 bears the N6-succinyllysine mark. Serine 49 carries the post-translational modification Phosphoserine. Histidine 58 contacts O2. Histidine 87 is a heme b binding site. Residue serine 102 is modified to Phosphoserine. Phosphothreonine is present on threonine 108. Serine 124 carries the post-translational modification Phosphoserine. A phosphothreonine mark is found at threonine 134 and threonine 137. Serine 138 carries the post-translational modification Phosphoserine.

Belongs to the globin family. As to quaternary structure, heterotetramer of two alpha chains and two beta chains. In terms of tissue distribution, red blood cells.

In terms of biological role, involved in oxygen transport from the lung to the various peripheral tissues. The protein is Hemoglobin subunit alpha-1/2 of Mustela putorius (European polecat).